The sequence spans 330 residues: MNSSTDPTSDETIWDLSPYIKIFKDGRVERLHNSPYVPPSLNDPETGVSWKDVPISSQVSARVYIPKISDHEKLPIFVYVHGAGFCLESAFRSFFHTFVKHFVAETKVIGVSIEYRLAPEHLLPAAYEDCWEALQWVASHVGLDNSGLKTAIDKDPWIINYGDFDRLYLAGDSPGANIVHNTLIRAGKEKLKGGVKILGAILYYPYFIIPTSTKLSDDFEYNYTCYWKLAYPNAPGGMNNPMINPIAENAPDLAGYGCSRLLVTLVSMISTTPDETKDINAVYIEALEKSGWKGELEVADFDADYFELFTLETEMGKNMFRRLASFIKHE.

The Involved in the stabilization of the negatively charged intermediate by the formation of the oxyanion hole signature appears at His81–Ala83. Residue Gly84 coordinates catharanthine. The active-site Proton acceptor is the Ser173. Asp274 is a catalytic residue. Tyr305 contributes to the catharanthine binding site. Tyr305 (proton donor/acceptor) is an active-site residue.

The protein belongs to the 'GDXG' lipolytic enzyme family. As to quaternary structure, interacts with dehydroprecondylocarpine acetate synthase (DPAS). As to expression, expressed in leaf epidermis.

The protein localises to the cytoplasm. It is found in the cytosol. The protein resides in the nucleus. It carries out the reaction dehydrosecodine = catharanthine. Its pathway is alkaloid biosynthesis. Functionally, component of iboga and aspidosperma monoterpenoid indole alkaloids (MIAs, e.g. tabersonine and catharanthine) biosynthesis pathway from 19E-geissoschizine, psychoactive compounds likely to be used in the treatment of opioid dependence. Catalyzes the conversion of dehydrosecodine to catharanthine. In Catharanthus roseus (Madagascar periwinkle), this protein is Catharanthine synthase.